We begin with the raw amino-acid sequence, 159 residues long: Glutamate-rich protein GrpA (159 aa).

This chain is Glutamate-rich protein GrpA (grpA), found in Alkalihalophilus pseudofirmus (strain ATCC BAA-2126 / JCM 17055 / OF4) (Bacillus pseudofirmus).